Reading from the N-terminus, the 60-residue chain is uncharacterized protein (60 aa).

The N-terminal stretch at 1–21 (MNKLLKLFFITIIIYNNIAFA) is a signal peptide.

This is an uncharacterized protein from Rickettsia prowazekii (strain Madrid E).